The chain runs to 123 residues: Small ribosomal subunit protein uS12 (123 aa).

Residues 1-28 (MPTIQQLIRKPRQPKVKRSKSQHLESCP) form a disordered region. Over residues 9–21 (RKPRQPKVKRSKS) the composition is skewed to basic residues. At Asp89 the chain carries 3-methylthioaspartic acid.

The protein belongs to the universal ribosomal protein uS12 family. As to quaternary structure, part of the 30S ribosomal subunit. Contacts proteins S8 and S17. May interact with IF1 in the 30S initiation complex.

Functionally, with S4 and S5 plays an important role in translational accuracy. In terms of biological role, interacts with and stabilizes bases of the 16S rRNA that are involved in tRNA selection in the A site and with the mRNA backbone. Located at the interface of the 30S and 50S subunits, it traverses the body of the 30S subunit contacting proteins on the other side and probably holding the rRNA structure together. The combined cluster of proteins S8, S12 and S17 appears to hold together the shoulder and platform of the 30S subunit. The sequence is that of Small ribosomal subunit protein uS12 from Dinoroseobacter shibae (strain DSM 16493 / NCIMB 14021 / DFL 12).